The chain runs to 234 residues: Purine nucleoside phosphorylase DeoD-type (234 aa).

Position 5 (H5) interacts with a purine D-ribonucleoside. Phosphate contacts are provided by residues G21, R25, R44, and 88 to 91 (RIGT). A purine D-ribonucleoside-binding positions include 180–182 (DME) and 204–205 (SD). Catalysis depends on D205, which acts as the Proton donor.

This sequence belongs to the PNP/UDP phosphorylase family. As to quaternary structure, homohexamer; trimer of homodimers.

It catalyses the reaction a purine D-ribonucleoside + phosphate = a purine nucleobase + alpha-D-ribose 1-phosphate. The catalysed reaction is a purine 2'-deoxy-D-ribonucleoside + phosphate = a purine nucleobase + 2-deoxy-alpha-D-ribose 1-phosphate. In terms of biological role, catalyzes the reversible phosphorolytic breakdown of the N-glycosidic bond in the beta-(deoxy)ribonucleoside molecules, with the formation of the corresponding free purine bases and pentose-1-phosphate. This chain is Purine nucleoside phosphorylase DeoD-type, found in Buchnera aphidicola subsp. Acyrthosiphon pisum (strain 5A).